The sequence spans 256 residues: Major prion protein 2 (256 aa).

An N-terminal signal peptide occupies residues 1–24; it reads MVKSHIGSWILVLFVAMWSDVALC. The interaction with GRB2, ERI3 and SYN1 stretch occupies residues 25–233; that stretch reads KKRPKPGGGW…ESEAYYQRGA (209 aa). The tract at residues 28–110 is disordered; it reads PKPGGGWNTG…QWNKPSKPKT (83 aa). Tandem repeats lie at residues 54-62, 63-70, 71-78, 79-86, and 87-95. The tract at residues 54–95 is 5 X 8 AA tandem repeats of P-H-G-G-G-W-G-Q; sequence PQEGGDWGQPHGGGWGQPHVGGWGQPHGGGWGQPHGGGGWGQ. Residues 58-99 show a composition bias toward gly residues; it reads GDWGQPHGGGWGQPHVGGWGQPHGGGWGQPHGGGGWGQGGTH. Residues histidine 64, glycine 65, glycine 66, histidine 72, glycine 74, histidine 80, glycine 81, glycine 82, histidine 88, glycine 90, and glycine 91 each contribute to the Cu(2+) site. A disulfide bond links cysteine 182 and cysteine 217. 2 N-linked (GlcNAc...) asparagine glycosylation sites follow: asparagine 184 and asparagine 200. The GPI-anchor amidated alanine moiety is linked to residue alanine 233. Residues 234 to 256 constitute a propeptide, removed in mature form; sequence SVILFSSPPVILLISFLIFLIVG.

It belongs to the prion family. In terms of assembly, monomer and homodimer. Has a tendency to aggregate into amyloid fibrils containing a cross-beta spine, formed by a steric zipper of superposed beta-strands. Soluble oligomers may represent an intermediate stage on the path to fibril formation. Copper binding may promote oligomerization. Interacts with GRB2, APP, ERI3/PRNPIP and SYN1. Mislocalized cytosolically exposed PrP interacts with MGRN1; this interaction alters MGRN1 subcellular location and causes lysosomal enlargement. Interacts with KIAA1191.

It is found in the cell membrane. Its subcellular location is the golgi apparatus. Its primary physiological function is unclear. Has cytoprotective activity against internal or environmental stresses. May play a role in neuronal development and synaptic plasticity. May be required for neuronal myelin sheath maintenance. May play a role in iron uptake and iron homeostasis. Soluble oligomers are toxic to cultured neuroblastoma cells and induce apoptosis (in vitro). Association with GPC1 (via its heparan sulfate chains) targets PRNP to lipid rafts. Also provides Cu(2+) or Zn(2+) for the ascorbate-mediated GPC1 deaminase degradation of its heparan sulfate side chains. The sequence is that of Major prion protein 2 from Tragelaphus strepsiceros (Greater kudu).